Consider the following 190-residue polypeptide: uncharacterized protein (190 aa).

The 185-residue stretch at 1 to 185 (MITMFKIVRG…LALETIGLGD (185 aa)) folds into the Macro domain.

This is an uncharacterized protein from Pyrococcus horikoshii (strain ATCC 700860 / DSM 12428 / JCM 9974 / NBRC 100139 / OT-3).